The chain runs to 425 residues: Putative nucleoside transporter YegT (425 aa).

Residues 1-8 (MKTTAKLS) are Periplasmic-facing. The chain crosses the membrane as a helical span at residues 9–29 (FMMFVEWFIWGAWFVPLWLWL). At 30–38 (SKSGFSAGE) the chain is on the cytoplasmic side. A helical membrane pass occupies residues 39–59 (IGWSYACTAIAAILSPILVGS). Topologically, residues 60 to 63 (ITDR) are periplasmic. The helical transmembrane segment at 64-84 (FFSAQKVLAVLMFAGALLMYF) threads the bilayer. Residues 85–90 (AAQQTT) are Cytoplasmic-facing. The chain crosses the membrane as a helical span at residues 91–111 (FAGFFPLLLAYSLTYMPTIAL). At 112 to 131 (TNSIAFANVPDVERDFPRIR) the chain is on the periplasmic side. A helical membrane pass occupies residues 132–152 (VMGTIGWIASGLACGFLPQIL). The Cytoplasmic portion of the chain corresponds to 153-161 (GYADISPTN). The helical transmembrane segment at 162 to 182 (IPLLITAGSSALLGVFAFFLP) threads the bilayer. Residues 183-210 (DTPPKSTGKMDIKVMLGLDALILLRDKN) are Periplasmic-facing. A helical membrane pass occupies residues 211–231 (FLVFFFCSFLFAMPLAFYYIF). Residues 232-244 (ANGYLTEVGMKNA) are Cytoplasmic-facing. A helical transmembrane segment spans residues 245-265 (TGWMTLGQFSEIFFMLALPFF). The Periplasmic segment spans residues 266–287 (TKRFGIKKVLLLGLVTAAIRYG). The chain crosses the membrane as a helical span at residues 288–308 (FFIYGSADEYFTYALLFLGIL). Over 309–339 (LHGVSYDFYYVTAYIYVDKKAPVHMRTAAQG) the chain is Cytoplasmic. The chain crosses the membrane as a helical span at residues 340–360 (LITLCCQGFGSLLGYRLGGVM). At 361-379 (MEKMFAYQEPVNGLTFNWS) the chain is on the periplasmic side. Residues 380–400 (GMWTFGAVMIAIIAVLFMIFF) traverse the membrane as a helical segment. Residues 401–425 (RESDNEITAIKVDDRDIALTQGEVK) are Cytoplasmic-facing.

The protein belongs to the major facilitator superfamily. Nucleoside:H(+) symporter (NHS) (TC 2.A.1.10) family.

It is found in the cell inner membrane. In terms of biological role, could be involved in nucleoside transport. The protein is Putative nucleoside transporter YegT (yegT) of Escherichia coli (strain K12).